The following is a 169-amino-acid chain: MRGSLAIYNALKDSNIDFICSVPCANLKNLLKLIEEDKNIINIPATREEEAFGICAGAYLAGKKTAILMQNSGIGNSINAIASLYKTFQIPTLLIISHRGDLKEQIPAQIPMGRWIEKLLDVCEIPTYKPKTPEEAYKLIKYASSYMYKISYPVALLFDALYWEYDLEK.

This sequence belongs to the ComD family. Heterododecamer composed of 6 subunits alpha and 6 subunits beta.

It carries out the reaction 3-sulfopyruvate + H(+) = sulfoacetaldehyde + CO2. Its pathway is cofactor biosynthesis; coenzyme M biosynthesis; sulfoacetaldehyde from phosphoenolpyruvate and sulfite: step 4/4. Its activity is regulated as follows. Inhibited by oxygen when heated in air at 80 degrees Celsius. The enzyme is reactivated by addition of dithionite. Its function is as follows. Involved in the biosynthesis of the coenzyme M (2-mercaptoethanesulfonic acid). Catalyzes the decarboxylation of sulfopyruvate to sulfoacetaldehyde. This Methanocaldococcus jannaschii (strain ATCC 43067 / DSM 2661 / JAL-1 / JCM 10045 / NBRC 100440) (Methanococcus jannaschii) protein is Sulfopyruvate decarboxylase subunit alpha.